Consider the following 211-residue polypeptide: Ribonuclease P protein component 3 (211 aa).

The protein belongs to the eukaryotic/archaeal RNase P protein component 3 family. In terms of assembly, consists of a catalytic RNA component and at least 4-5 protein subunits.

It localises to the cytoplasm. The catalysed reaction is Endonucleolytic cleavage of RNA, removing 5'-extranucleotides from tRNA precursor.. In terms of biological role, part of ribonuclease P, a protein complex that generates mature tRNA molecules by cleaving their 5'-ends. In Aeropyrum pernix (strain ATCC 700893 / DSM 11879 / JCM 9820 / NBRC 100138 / K1), this protein is Ribonuclease P protein component 3.